The following is a 124-amino-acid chain: uncharacterized protein (124 aa).

This protein may be involved in virus assembly. This is an uncharacterized protein from Sulfolobus spindle-shape virus 1 (SSV1).